A 469-amino-acid polypeptide reads, in one-letter code: 6-phospho-beta-galactosidase (469 aa).

The D-galactose 6-phosphate site is built by Gln19, His116, Asn159, Glu160, and Asn297. Catalysis depends on Glu160, which acts as the Proton donor. The active-site Nucleophile is Glu375. Residues Ser428, Trp429, Lys435, and Tyr437 each coordinate D-galactose 6-phosphate.

This sequence belongs to the glycosyl hydrolase 1 family.

The enzyme catalyses a 6-phospho-beta-D-galactoside + H2O = D-galactose 6-phosphate + an alcohol. It participates in carbohydrate metabolism; lactose degradation; D-galactose 6-phosphate and beta-D-glucose from lactose 6-phosphate: step 1/1. The polypeptide is 6-phospho-beta-galactosidase (Streptococcus equi subsp. zooepidemicus (strain H70)).